Here is a 304-residue protein sequence, read N- to C-terminus: Acetyl-coenzyme A carboxylase carboxyl transferase subunit beta (304 aa).

Positions 23–292 (VWTKCDSCGQ…PNPDAPREGE (270 aa)) constitute a CoA carboxyltransferase N-terminal domain. The Zn(2+) site is built by C27, C30, C46, and C49. The C4-type zinc finger occupies 27–49 (CDSCGQVLYRAELERNLEVCPKC). The tract at residues 281–304 (PAPNPDAPREGEVVPPVPDQEPEA) is disordered. The span at 295–304 (PPVPDQEPEA) shows a compositional bias: pro residues.

This sequence belongs to the AccD/PCCB family. As to quaternary structure, acetyl-CoA carboxylase is a heterohexamer composed of biotin carboxyl carrier protein (AccB), biotin carboxylase (AccC) and two subunits each of ACCase subunit alpha (AccA) and ACCase subunit beta (AccD). The cofactor is Zn(2+).

It localises to the cytoplasm. It carries out the reaction N(6)-carboxybiotinyl-L-lysyl-[protein] + acetyl-CoA = N(6)-biotinyl-L-lysyl-[protein] + malonyl-CoA. The protein operates within lipid metabolism; malonyl-CoA biosynthesis; malonyl-CoA from acetyl-CoA: step 1/1. Functionally, component of the acetyl coenzyme A carboxylase (ACC) complex. Biotin carboxylase (BC) catalyzes the carboxylation of biotin on its carrier protein (BCCP) and then the CO(2) group is transferred by the transcarboxylase to acetyl-CoA to form malonyl-CoA. The sequence is that of Acetyl-coenzyme A carboxylase carboxyl transferase subunit beta from Citrobacter koseri (strain ATCC BAA-895 / CDC 4225-83 / SGSC4696).